We begin with the raw amino-acid sequence, 251 residues long: 5'-nucleotidase SurE (251 aa).

Asp8, Asp9, Ser39, and Asn91 together coordinate a divalent metal cation.

The protein belongs to the SurE nucleotidase family. The cofactor is a divalent metal cation.

It localises to the cytoplasm. It carries out the reaction a ribonucleoside 5'-phosphate + H2O = a ribonucleoside + phosphate. Nucleotidase that shows phosphatase activity on nucleoside 5'-monophosphates. This chain is 5'-nucleotidase SurE, found in Thioalkalivibrio sulfidiphilus (strain HL-EbGR7).